We begin with the raw amino-acid sequence, 485 residues long: MKPTIALIGRPNVGKSTLFNRLTRTKDALVHDLPGLTRDRHYGHGKVGSKPYFVIDTGGFEPVVDSGILHEMAKQTLQAVDEADAVVFLVDGRTGLTPQDKIIADRLRQSPRPVYLAVNKGEGGDRAVLAAEFYELALGEPHVISGAHGDGVYYLIEEILENFPEPEAEEADAKHPVFAVIGRPNVGKSTLVNAILGEKRVIAFDMAGTTRDSIHIDFEREGKPFTIIDTAGVRRRGKVDEAVEKFSVIKAMQAVEAANVAVLVLDAQQDIADQDATIAGFALEAGRALVVAVNKWDGISEERREQVKRDISRKLYFLDFAKFHFISALKERGIDGLFESIQAAYNAAMIKMPTPKITRVLQTAVGRQQPPRAGLVRPKMRYAHQGGMNPPVIVVHGNSLHAISDSYTRYLTQTFRKAFNLQGTPLRIQYNVSENPYENAEDKPKKKPLRRVSLSNRIEKREGRKEEKNRFKKKTKVSVKKQFSK.

EngA-type G domains lie at 3 to 167 (PTIA…PEPE) and 176 to 349 (PVFA…NAAM). GTP is bound by residues 9-16 (GRPNVGKS), 56-60 (DTGGF), 119-122 (NKGE), 182-189 (GRPNVGKS), 229-233 (DTAGV), and 294-297 (NKWD). The region spanning 350–434 (IKMPTPKITR…PLRIQYNVSE (85 aa)) is the KH-like domain. Residues 435 to 485 (NPYENAEDKPKKKPLRRVSLSNRIEKREGRKEEKNRFKKKTKVSVKKQFSK) are disordered. Residues 457–469 (RIEKREGRKEEKN) show a composition bias toward basic and acidic residues. Residues 470 to 485 (RFKKKTKVSVKKQFSK) are compositionally biased toward basic residues.

The protein belongs to the TRAFAC class TrmE-Era-EngA-EngB-Septin-like GTPase superfamily. EngA (Der) GTPase family. As to quaternary structure, associates with the 50S ribosomal subunit.

Functionally, GTPase that plays an essential role in the late steps of ribosome biogenesis. This is GTPase Der from Neisseria gonorrhoeae (strain NCCP11945).